Reading from the N-terminus, the 305-residue chain is Protein FdhE homolog (305 aa).

Belongs to the FdhE family.

It is found in the cytoplasm. Functionally, necessary for formate dehydrogenase activity. This is Protein FdhE homolog from Actinobacillus pleuropneumoniae serotype 7 (strain AP76).